The primary structure comprises 78 residues: TP53-regulated inhibitor of apoptosis 1 (78 aa).

Residues 1–52 (MNSVGEECTDMKREYDQCFNRWFAEKFLKGECSGDPCTELFRRYRDCVQKAI) are a coiled coil. A CHCH domain is found at 5–55 (GEECTDMKREYDQCFNRWFAEKFLKGECSGDPCTELFRRYRDCVQKAIKDK). 2 short sequence motifs (cx9C motif) span residues 8–18 (CTDMKREYDQC) and 37–47 (CTELFRRYRDC). Intrachain disulfides connect cysteine 8–cysteine 47 and cysteine 18–cysteine 37.

The protein belongs to the TRIAP1/MDM35 family. Monomer. Forms a complex with prelid1 in the mitochondrion intermembrane space. Interacts with prelid3a. As to expression, expressed in the developing pronephros.

The protein localises to the mitochondrion. It localises to the mitochondrion intermembrane space. The enzyme catalyses a 1,2-diacyl-sn-glycero-3-phosphate(in) = a 1,2-diacyl-sn-glycero-3-phosphate(out). In terms of biological role, involved in the modulation of the mitochondrial apoptotic pathway by ensuring the accumulation of cardiolipin (CL) in mitochondrial membranes. The triap1:prelid1 complex probably functions as a phosphatidic acid (PA) transporter across the mitochondrion intermembrane space to provide PA for cardiolipin CL synthesis in the inner membrane. Likewise, the triap1:prelid3a complex mediates the transfer of phosphatidic acid (PA) between liposomes (in vitro) and probably functions as a PA transporter across the mitochondrion intermembrane space (in vivo). Mediates cell survival by inhibiting activation of caspase-9 which prevents induction of apoptosis. Required for pronephros development; probably involved at an early stage in the formation of pronephric components derived from the somatic layer. This is TP53-regulated inhibitor of apoptosis 1 from Xenopus tropicalis (Western clawed frog).